A 186-amino-acid polypeptide reads, in one-letter code: Putative CTD phosphatase-like protein 355R (186 aa).

The 181-residue stretch at 2–182 (ENNKKKLILL…TELLKVQKTL (181 aa)) folds into the FCP1 homology domain.

The protein belongs to the IIV-6 355R family.

May function as a phosphatase. The sequence is that of Putative CTD phosphatase-like protein 355R from Aedes vexans (Inland floodwater mosquito).